Reading from the N-terminus, the 34-residue chain is Putative protein YmiB (34 aa).

A helical membrane pass occupies residues 7 to 24; sequence TAAKRIVFFIYLFVIQFW.

The protein localises to the membrane. This Escherichia coli (strain K12) protein is Putative protein YmiB (ymiB).